A 530-amino-acid chain; its full sequence is Light-independent protochlorophyllide reductase subunit B (530 aa).

Asp-36 serves as a coordination point for [4Fe-4S] cluster. The active-site Proton donor is the Asp-290. 425-426 (GL) provides a ligand contact to substrate.

The protein belongs to the ChlB/BchB/BchZ family. Protochlorophyllide reductase is composed of three subunits; ChlL, ChlN and ChlB. Forms a heterotetramer of two ChlB and two ChlN subunits. [4Fe-4S] cluster serves as cofactor.

It carries out the reaction chlorophyllide a + oxidized 2[4Fe-4S]-[ferredoxin] + 2 ADP + 2 phosphate = protochlorophyllide a + reduced 2[4Fe-4S]-[ferredoxin] + 2 ATP + 2 H2O. It functions in the pathway porphyrin-containing compound metabolism; chlorophyll biosynthesis (light-independent). Functionally, component of the dark-operative protochlorophyllide reductase (DPOR) that uses Mg-ATP and reduced ferredoxin to reduce ring D of protochlorophyllide (Pchlide) to form chlorophyllide a (Chlide). This reaction is light-independent. The NB-protein (ChlN-ChlB) is the catalytic component of the complex. The polypeptide is Light-independent protochlorophyllide reductase subunit B (Synechococcus sp. (strain WH7803)).